We begin with the raw amino-acid sequence, 286 residues long: Centromere protein P (286 aa).

A coiled-coil region spans residues 1–73 (MDSETRELRA…RSEHSFLSKL (73 aa)). The residue at position 38 (Ser38) is a Phosphoserine.

It belongs to the CENP-P/CTF19 family. As to quaternary structure, component of the CENPA-CAD complex, composed of CENPI, CENPK, CENPL, CENPO, CENPP, CENPQ, CENPR and CENPS. The CENPA-CAD complex interacts with the CENPA-NAC complex, at least composed of CENPA, CENPC, CENPH, CENPM, CENPN, CENPT and CENPU.

It localises to the nucleus. The protein localises to the chromosome. The protein resides in the centromere. Component of the CENPA-CAD (nucleosome distal) complex, a complex recruited to centromeres which is involved in assembly of kinetochore proteins, mitotic progression and chromosome segregation. May be involved in incorporation of newly synthesized CENPA into centromeres via its interaction with the CENPA-NAC complex. The protein is Centromere protein P (Cenpp) of Mus musculus (Mouse).